The primary structure comprises 936 residues: Aftiphilin (936 aa).

Positions 1 to 36 (MEPDIIRMYSSSPPPLDNGAEDDDDDEFGEFGGFSE) are disordered. The tract at residues 1-523 (MEPDIIRMYS…ARKSSGTGTE (523 aa)) is interaction with AP1G1, AP1G2, GGA1 and GGA3. Positions 19 to 29 (GAEDDDDDEFG) are enriched in acidic residues. The short motif at 28–31 (FGEF) is the WXXF motif 1 element. The residue at position 151 (S151) is a Phosphoserine. Disordered regions lie at residues 197–216 (TDDL…STHS) and 374–409 (KTSD…LDDS). Residues 374–389 (KTSDDEVGSPKEESRK) are compositionally biased toward basic and acidic residues. The tract at residues 386–610 (ESRKFTNFQS…EAWQSHRTDE (225 aa)) is interaction with AP1G1. S395 bears the Phosphoserine mark. The WXXF motif 2 signature appears at 432-435 (FGDF). The short motif at 436 to 438 (GDF) is the WXXF motif 3 (partial) element. Positions 478-481 (FGEF) match the WXXF motif 4 motif. S518 is subject to Phosphoserine. Residues 589-637 (GDQQATESHHRKEAWQSHRTDENIDTPGTPKTHSVPSATSKGAVASGHL) form a disordered region. A compositionally biased stretch (basic and acidic residues) spans 595 to 610 (ESHHRKEAWQSHRTDE). The residue at position 617 (T617) is a Phosphothreonine. Residues 617–628 (TPKTHSVPSATS) are compositionally biased toward polar residues. Residues 716 to 718 (YQW) carry the CLTCL1/Clathrin-binding motif. The clathrin-binding stretch occupies residues 825-829 (LLNLD).

Self-associates. Interacts with GGA1 (via GAE domain). Interacts with GGA3 (via GAE domain), AP1G1 (via GAE domain) and AP1G2 (via GAE domain). Component of the aftiphilin/p200/gamma-synergin complex, at least composed of AFTPH/aftiphilin, HEATR5B/p200a and SYNRG/gamma-synergin, which plays a role in the AP1G1/AP-1-mediated protein trafficking from early to recycling endosomes. Within the complex interacts with HEATR5B/p200a and SYNRG/gamma-synergin; the interactions are direct. Interacts with AP1G1/AP-1; the interaction is required to recruit AFTPH/aftiphilin to the perinuclear region of the cell. Interacts with CLTCL1/Clathrin.

It is found in the cytoplasm. It localises to the perinuclear region. The protein localises to the cytoplasmic vesicle. The protein resides in the clathrin-coated vesicle. Component of clathrin-coated vesicles. Component of the aftiphilin/p200/gamma-synergin complex, which plays roles in AP1G1/AP-1-mediated protein trafficking including the trafficking of transferrin from early to recycling endosomes, and the membrane trafficking of furin and the lysosomal enzyme cathepsin D between the trans-Golgi network (TGN) and endosomes. This is Aftiphilin (AFTPH) from Homo sapiens (Human).